The chain runs to 1067 residues: Kinesin-like protein KIF11 (1067 aa).

In terms of domain architecture, Kinesin motor spans 18-359 (NIQVVVRCRP…LEYANRAKNI (342 aa)). 105-112 (GQTGTGKT) provides a ligand contact to ATP. Positions 365 to 480 (VNQKLTKRAL…SKEQLAQEAF (116 aa)) form a coiled coil. Threonine 937 is subject to Phosphothreonine; by CDK1. Serine 1046 carries the post-translational modification Phosphoserine; by NEK6. Residues 1048 to 1067 (IMDEAEQSLPKSKLPLRMQN) form a disordered region.

Belongs to the TRAFAC class myosin-kinesin ATPase superfamily. Kinesin family. BimC subfamily. In terms of assembly, heterotetramer of two heavy and two light chains. Interacts with aurka. Post-translationally, phosphorylation of Thr-937 during mitosis controls the association of this protein with the spindle apparatus. A subset of this protein primarily localized at the spindle pole is phosphorylated by NEK6 during mitosis. In terms of processing, phosphorylated on a serine residue by aurka.

It localises to the cytoplasm. The protein localises to the cytoskeleton. The protein resides in the spindle pole. Its function is as follows. Plus end-directed motor protein required for establishing a bipolar spindle. Associates with both interphase and mitotic spindle microtubules. May be involved in nuclear divisions taking place during the development of unfertilized eggs. Required in non-mitotic cells for transport of secretory proteins from the Golgi complex to the cell surface. The protein is Kinesin-like protein KIF11 of Xenopus tropicalis (Western clawed frog).